A 134-amino-acid polypeptide reads, in one-letter code: Estradiol 17-beta-dehydrogenase 8 (134 aa).

Residue S38 coordinates substrate. Residue K42 is modified to N6-succinyllysine. Catalysis depends on Y51, which acts as the Proton acceptor. NAD(+) is bound by residues 51 to 55 and 84 to 86; these read YAASK and IAT. K55 carries the post-translational modification N6-succinyllysine.

The protein belongs to the short-chain dehydrogenases/reductases (SDR) family. Heterotetramer with CBR4; contains two molecules of HSD17B8 and CBR4.

The protein resides in the mitochondrion matrix. It catalyses the reaction 17beta-estradiol + NAD(+) = estrone + NADH + H(+). The catalysed reaction is 17beta-estradiol + NADP(+) = estrone + NADPH + H(+). It carries out the reaction testosterone + NAD(+) = androst-4-ene-3,17-dione + NADH + H(+). The protein operates within steroid biosynthesis; estrogen biosynthesis. It participates in lipid metabolism; fatty acid biosynthesis. Functionally, NAD-dependent 17-beta-hydroxysteroid dehydrogenase with highest activity towards estradiol. Has very low activity towards testosterone. The heterotetramer with CBR4 has NADH-dependent 3-ketoacyl-acyl carrier protein reductase activity, and thereby plays a role in mitochondrial fatty acid biosynthesis. Within the heterotetramer, HSD17B8 binds NADH; CBR4 binds NADPD. This is Estradiol 17-beta-dehydrogenase 8 (HSD17B8) from Callithrix jacchus (White-tufted-ear marmoset).